Reading from the N-terminus, the 200-residue chain is Vacuolar iron transporter homolog 1 (200 aa).

Residues 1-34 (MESHNVSNSLNLDMEMDQEKAFDYSKRAQWLRAA) are Cytoplasmic-facing. A helical transmembrane segment spans residues 35-55 (VLGANDGLVSTASLMMGVGAV). The Vacuolar portion of the chain corresponds to 56-62 (KQDVKVM). A helical transmembrane segment spans residues 63–83 (ILSGFAGLVAGACSMAIGEFV). Over 84–116 (SVYSQYDIEVAQMKRENGGQVEKEKLPSPMQAA) the chain is Cytoplasmic. The helical transmembrane segment at 117 to 137 (AASALAFSLGAIVPLMAAAFV) threads the bilayer. At 138–143 (KDYHVR) the chain is on the vacuolar side. A helical transmembrane segment spans residues 144 to 164 (IGAIVAAVTLALVMFGWLGAV). Residues 165-176 (LGKAPVFKSSAR) are Cytoplasmic-facing. The helical transmembrane segment at 177-197 (VLIGGWLAMAVTFGLTKLIGT) threads the bilayer. The Vacuolar portion of the chain corresponds to 198 to 200 (HSL).

It belongs to the CCC1 family. Expressed in the vascular bundles of the shoot and the stele of the root. Expressed in inflorescences and at lower levels in leaves.

It is found in the vacuole membrane. The catalysed reaction is Fe(2+)(in) = Fe(2+)(out). Vacuolar iron transporter involved in the transfer of iron ions from the cytosol to the vacuole for intracellular iron storage. Involved in regulation of cellular iron homeostasis. Vacuolar iron storage is required for seed embryo and seedling development. This chain is Vacuolar iron transporter homolog 1, found in Arabidopsis thaliana (Mouse-ear cress).